A 131-amino-acid polypeptide reads, in one-letter code: Small ribosomal subunit protein uS8 (131 aa).

Belongs to the universal ribosomal protein uS8 family. In terms of assembly, part of the 30S ribosomal subunit. Contacts proteins S5 and S12.

Its function is as follows. One of the primary rRNA binding proteins, it binds directly to 16S rRNA central domain where it helps coordinate assembly of the platform of the 30S subunit. This is Small ribosomal subunit protein uS8 from Janthinobacterium sp. (strain Marseille) (Minibacterium massiliensis).